A 644-amino-acid polypeptide reads, in one-letter code: uncharacterized protein (644 aa).

254 to 261 serves as a coordination point for ATP; the sequence is GKMGAGKS.

This is an uncharacterized protein from Bacillus anthracis.